The sequence spans 345 residues: Ryncolin-1 (345 aa).

An N-terminal signal peptide occupies residues 1–19; it reads MKPWAAFHLIFLVASSLEG. Residues 48–118 form a disordered region; it reads ILQSQPGIPG…DKGDKGEDCN (71 aa). Positions 57 to 114 constitute a Collagen-like domain; that stretch reads GIPGVPGTNGSEGLKGDPGPQGPPGIRGPDGIRGEAGPKGDKGDQGDKGDKGDKGDKG. Residues 86–116 show a composition bias toward basic and acidic residues; the sequence is DGIRGEAGPKGDKGDQGDKGDKGDKGDKGED. The Fibrinogen C-terminal domain occupies 121 to 339; it reads GCLPTEVRNC…YADMKIRPQQ (219 aa). Disulfide bonds link Cys130-Cys158 and Cys282-Cys295.

This sequence belongs to the ficolin lectin family. Veficolin subfamily. Post-translationally, hydroxylated, possibly at Pro-80. Expressed by the venom duct.

It localises to the secreted. Initiates complement activation and/or interferes in platelet aggregation and/or blood coagulation. The polypeptide is Ryncolin-1 (Cerberus rynchops (Dog-faced water snake)).